The chain runs to 181 residues: Major urinary protein 20 (181 aa).

An N-terminal signal peptide occupies residues 1 to 19; that stretch reads MKLLVLLLCLGLTLVCVHA. A disulfide bridge links Cys83 with Cys176.

The protein belongs to the calycin superfamily. Lipocalin family. As to expression, detected in urine of males but absent from female urine (at protein level).

It localises to the secreted. Functionally, male pheromone which stimulates female sexual attraction to male urinary scent and promotes a strong learned attraction to the airborne urinary odor of an individual male. Promotes spatial learning by rapidly conditioning preference for its remembered location among females and competitor males so that animals prefer to spend time in the site even when scent is absent. In addition to promoting a rapid attraction response, also elicits ultrasonic vocalizations and urinary scent marking in females which do not occur immediately after exposure. Stimulates hippocampal neurogenesis and cell proliferation in the subventricular zone in females. Promotes male aggressive behavior. Response to Mup20 is mediated by a neural circuit extending from the accessory olfactory bulb to a subset of nitric oxidase synthase-expressing neurons in the medial amygdala. As well as acting as a pheromone itself, binds most of the male pheromone, 2-sec-butyl-4,5-dihydrothiazole, in urine and is responsible for its slow release from scent marks. This chain is Major urinary protein 20, found in Mus musculus (Mouse).